The following is a 446-amino-acid chain: Signal recognition particle protein (446 aa).

Residues glycine 108 to threonine 115, aspartate 191 to arginine 195, and threonine 249 to aspartate 252 contribute to the GTP site.

This sequence belongs to the GTP-binding SRP family. SRP54 subfamily. As to quaternary structure, part of the signal recognition particle protein translocation system, which is composed of SRP and FtsY. Interacts with a small cytoplasmic RNA (sc-RNA).

Its subcellular location is the cytoplasm. It catalyses the reaction GTP + H2O = GDP + phosphate + H(+). Functionally, involved in targeting and insertion of nascent membrane proteins into the cytoplasmic membrane. Binds to the hydrophobic signal sequence of the ribosome-nascent chain (RNC) as it emerges from the ribosomes. The SRP-RNC complex is then targeted to the cytoplasmic membrane where it interacts with the SRP receptor FtsY. Interaction with FtsY leads to the transfer of the RNC complex to the Sec translocase for insertion into the membrane, the hydrolysis of GTP by both Ffh and FtsY, and the dissociation of the SRP-FtsY complex into the individual components. The protein is Signal recognition particle protein of Bacillus subtilis (strain 168).